The primary structure comprises 231 residues: Cytochrome c oxidase assembly factor 7 (231 aa).

Sel1-like repeat units lie at residues 34–66, 68–104, 108–145, 146–182, and 183–218; these read PDGC…DQNE, SESC…NKGG, IDSC…DGNF, AASC…SLGH, and MWGC…DLHR.

Belongs to the hcp beta-lactamase family.

The protein localises to the mitochondrion intermembrane space. Its function is as follows. May be required for assembly of mitochondrial respiratory chain complexes. The polypeptide is Cytochrome c oxidase assembly factor 7 (coa7) (Xenopus tropicalis (Western clawed frog)).